Here is a 157-residue protein sequence, read N- to C-terminus: Transcriptional repressor NrdR (157 aa).

Residues Cys3 to Cys34 fold into a zinc finger. Residues Leu46 to Asp136 form the ATP-cone domain.

It belongs to the NrdR family. Zn(2+) serves as cofactor.

Negatively regulates transcription of bacterial ribonucleotide reductase nrd genes and operons by binding to NrdR-boxes. The polypeptide is Transcriptional repressor NrdR (Clavibacter michiganensis subsp. michiganensis (strain NCPPB 382)).